A 263-amino-acid polypeptide reads, in one-letter code: (2Z,6E)-farnesyl diphosphate synthase (263 aa).

Asp-40 is an active-site residue. Asp-40 contributes to the Mg(2+) binding site. Residues 41–44 (GNRR), Trp-45, and 86–88 (STE) each bind substrate. Asn-89 (proton acceptor) is an active-site residue. Residues Arg-92, Arg-212, and 218-220 (RLS) contribute to the substrate site. Position 231 (Glu-231) interacts with Mg(2+).

It belongs to the UPP synthase family. Z-FPP synthase subfamily. Homodimer. It depends on Mg(2+) as a cofactor.

The protein localises to the cell membrane. It catalyses the reaction isopentenyl diphosphate + (2E)-geranyl diphosphate = (2Z,6E)-farnesyl diphosphate + diphosphate. Catalyzes the condensation of only one isopentenyl pyrophosphate (IPP) unit in the cis configuration to E-geranyl diphosphate (E-GPP) generating the 15 carbon product (2Z,6E)-farnesyl diphosphate (Z-FPP or EZ-FPP). Z-FPP is the precursor of decaprenyl diphosphate, which has a central role in the biosynthesis of the mycobacterial cell wall. The polypeptide is (2Z,6E)-farnesyl diphosphate synthase (uppS) (Mycolicibacterium smegmatis (strain ATCC 700084 / mc(2)155) (Mycobacterium smegmatis)).